We begin with the raw amino-acid sequence, 64 residues long: Large ribosomal subunit protein bL35 (64 aa).

Belongs to the bacterial ribosomal protein bL35 family.

The protein is Large ribosomal subunit protein bL35 of Shewanella frigidimarina (strain NCIMB 400).